We begin with the raw amino-acid sequence, 229 residues long: MSSLKKILGLKGKGKKSKKLGIAPPPYEEDTSMEYAPSAPIDKSYFGVDEMDTHDPNQLRYEKFFFTVKLTVRSNRPFRTYSDVAAAVSHWDHMYIGMAGKRPFYKILAFLGSSNLKATPAVLADQGQPEYHAHCEGRAYLPHRMGKTPPMLNVPEHFRRPFNIGLYKGTIELTMTIYDDESLEAAPMIWDHFNSSKFSDFREKALMFGLIVEKKASGAWILDSVSHFK.

The segment covering 1–10 has biased composition (low complexity); that stretch reads MSSLKKILGL. Residues 1-23 are disordered; sequence MSSLKKILGLKGKGKKSKKLGIA. A dynamin binding motif is present at residues 2-4; it reads SSL. The PPXY motif signature appears at 24 to 27; the sequence is PPPY. A PTAP/PSAP motif motif is present at residues 37-40; the sequence is PSAP.

Belongs to the vesiculoviruses matrix protein family. In terms of assembly, homomultimer. Interacts with viral nucleocapsid; this interaction contributes to the virion assembly. Interacts with the viral envelope glycoprotein; this interaction contributes to the virion assembly. Interacts with host RAE1-NUP98 complex. Interacts with host NEDD4 and TSG101. Interacts with host dynamin. Interacts with host NDUFAF4; the interaction inhibits viral propagation and is independent of interferon activation. Interacts with host GTF2H5; the interaction may inhibit host transcription. Post-translationally, phosphorylated by host.

It is found in the virion. The protein localises to the host endomembrane system. Its subcellular location is the host nucleus membrane. The protein resides in the host nucleus. It localises to the host cytoplasm. Its function is as follows. Forms a double layer around the helical nucleocapsid, the inner matrix layer binding to the N helix and the outer matrix layer binding to the envelope glycoprotein. Plays a major role in assembly and budding of virion, by recruiting cellular partners of the ESCRT complexes that play a key role in releasing the budding particle from the host membrane. Condensates the ribonucleocapsid core during virus assembly. Inhibits the host mRNA nuclear export thereby inducing the shut off of cellular transcription and preventing the interferon signaling and the establishment of antiviral state in infected cells. This shutoff presumably inhibits interferon signaling and thus establishment of antiviral state in virus infected cells. Induces cell-rounding, cytoskeleton disorganization and apoptosis in infected cell. Inhibits host transcription, possibly through interaction with host DNA repair factor IIH/TFIIH GTF2H5 subunit. The polypeptide is Matrix protein (M) (Vesicular stomatitis Indiana virus (strain 98COE North America) (VSIV)).